The chain runs to 450 residues: MANQLRETHQSLKKKYRELIDGESSLPPEKRNQVNLAQLLMDSRERNKQLAEEVKEVTQRLSETQGDNKLLRMTITKQRLGDDEVGIRHFPAHEREDLVRQLEKAALHREELEHTLKTLSDELQDVKAERTVFKEKSKRLNLELNHILGGQEKRIIDVDALCMENKYLHERLKQVQEEVSLLKSNIQKYKTALDRRKNPEIGGKSSSRSLTGVLSPKQVHGFLSEENGCSLPATPQSISDLKSLATALLETIHEKNIIIQHQRQTNRILGNRVADLERKLKTLEISGLWSLPDDRTGRGGPSLWERDTAGDDSFPNMWRGSRPGPDGGAGEEDTPVTREESDPSGTRTNGQVGTQLKEKKTACCPVTEVIAAVEELCVVLEAEDAVLALDPAGLQLQWTQTPSVTLEQSACKNTDIKNSAGSPATDLGEISEGAAVKIEPIEESGSSFVS.

Coiled coils occupy residues 1 to 197 (MANQ…DRRK) and 259 to 286 (IQHQ…LEIS). Positions 290 to 358 (SLPDDRTGRG…NGQVGTQLKE (69 aa)) are disordered. The span at 343–354 (PSGTRTNGQVGT) shows a compositional bias: polar residues.

This sequence belongs to the CCDC149 family.

This chain is Coiled-coil domain-containing protein 149-A (ccdc149a), found in Danio rerio (Zebrafish).